The primary structure comprises 348 residues: MSKPNQTLGEFIIENQSDFPGSSGELSRLINSLRLAAKVVNHEVNKAGLVDIIGAYGETNVQGEDQQKLDVYANNKFIQTLTNREIVCGIASEENDDFIQIEGHKGDHQNKYVVLMDPLDGSSNIDVNVSVGTIFSIYQRVTPVGTPVQKEDFLQPGNKQVAAGYIIYGTSTMLVYTTGHGVNGFTLNPALGSWYLSHPDMKFPEEGQIYSINEGNYIHFPQGVKDYIKYCQQEEGNRPYTSRYIGSMVSDIHRNMIKGGIFMYPKSSKASEGKLRLLYECNPFAFITEQAGGKASDGFQRIMDIDPTELHQRVPFFCGSKKMVEKAEEFMANAKANPQSQEFSFSSK.

Mg(2+) contacts are provided by Glu93, Asp117, Leu119, and Asp120. Substrate is bound by residues 120–123 (DGSS), Asn213, Tyr244, and Lys274. Glu280 lines the Mg(2+) pocket.

The protein belongs to the FBPase class 1 family. In terms of assembly, homotetramer. Requires Mg(2+) as cofactor.

Its subcellular location is the cytoplasm. It catalyses the reaction beta-D-fructose 1,6-bisphosphate + H2O = beta-D-fructose 6-phosphate + phosphate. Its pathway is carbohydrate biosynthesis; gluconeogenesis. This Christiangramia forsetii (strain DSM 17595 / CGMCC 1.15422 / KT0803) (Gramella forsetii) protein is Fructose-1,6-bisphosphatase class 1 2.